Reading from the N-terminus, the 311-residue chain is ATP synthase subunit a (311 aa).

The next 6 membrane-spanning stretches (helical) occupy residues 62–82 (AVHVDTLGWGIFLALLLGFIF), 123–143 (IAPMGLTIFSWVFMMNLMDLI), 170–190 (DPNATLGMAFTVFALMIMFSI), 213–233 (LWYLNILLIPVNTILETVALI), 253–273 (IFILIALLFSVGLVMGFVGGV), and 276–296 (WAWAVFHILVITLQAFIFMVL).

This sequence belongs to the ATPase A chain family. As to quaternary structure, F-type ATPases have 2 components, CF(1) - the catalytic core - and CF(0) - the membrane proton channel. CF(1) has five subunits: alpha(3), beta(3), gamma(1), delta(1), epsilon(1). CF(0) has three main subunits: a(1), b(2) and c(9-12). The alpha and beta chains form an alternating ring which encloses part of the gamma chain. CF(1) is attached to CF(0) by a central stalk formed by the gamma and epsilon chains, while a peripheral stalk is formed by the delta and b chains.

The protein resides in the cell inner membrane. Functionally, key component of the proton channel; it plays a direct role in the translocation of protons across the membrane. In Saccharophagus degradans (strain 2-40 / ATCC 43961 / DSM 17024), this protein is ATP synthase subunit a.